The following is a 94-amino-acid chain: Small ribosomal subunit protein bS18 (94 aa).

This sequence belongs to the bacterial ribosomal protein bS18 family. As to quaternary structure, part of the 30S ribosomal subunit. Forms a tight heterodimer with protein bS6.

In terms of biological role, binds as a heterodimer with protein bS6 to the central domain of the 16S rRNA, where it helps stabilize the platform of the 30S subunit. The polypeptide is Small ribosomal subunit protein bS18 (Leptospira biflexa serovar Patoc (strain Patoc 1 / Ames)).